Here is an 887-residue protein sequence, read N- to C-terminus: Pre-mRNA-splicing factor cwf22 (887 aa).

Positions Met1 to Arg27 are disordered. An MIF4G domain is found at Lys124 to Lys307. Residues Ile366–Val401 are disordered. Acidic residues predominate over residues Gly368 to Val394. The MI domain occupies Asn411–Leu527. Disordered stretches follow at residues Met607–His834 and Gly867–Asp887. Positions Glu618 to Ser662 are enriched in low complexity. Ser662 is modified (phosphoserine). A Phosphothreonine modification is found at Thr664. The span at Lys677–Ser690 shows a compositional bias: basic and acidic residues. Positions Asn691–Tyr712 are enriched in low complexity. Positions Arg717–Tyr726 are enriched in basic and acidic residues. Residues Arg736–Arg746 are compositionally biased toward basic residues. Low complexity-rich tracts occupy residues Ser747–Pro762 and Ser769–Pro791. Residues Asp799–Pro809 show a composition bias toward polar residues.

This sequence belongs to the CWC22 family. In terms of assembly, belongs to the 40S cdc5-associated complex (or cwf complex), a spliceosome sub-complex reminiscent of a late-stage spliceosome composed of the U2, U5 and U6 snRNAs and at least brr2, cdc5, cwf2/prp3, cwf3/syf1, cwf4/syf3, cwf5/ecm2, spp42/cwf6, cwf7/spf27, cwf8, cwf9, cwf10, cwf11, cwf12, prp45/cwf13, cwf14, cwf15, cwf16, cwf17, cwf18, cwf19, cwf20, cwf21, cwf22, cwf23, cwf24, cwf25, cwf26, cyp7/cwf27, cwf28, cwf29/ist3, lea1, msl1, prp5/cwf1, prp10, prp12/sap130, prp17, prp22, sap61, sap62, sap114, sap145, slu7, smb1, smd1, smd3, smf1, smg1 and syf2.

It localises to the cytoplasm. It is found in the nucleus. In terms of biological role, may be involved in pre-mRNA splicing. The polypeptide is Pre-mRNA-splicing factor cwf22 (cwf22) (Schizosaccharomyces pombe (strain 972 / ATCC 24843) (Fission yeast)).